Reading from the N-terminus, the 77-residue chain is Apelin (77 aa).

Residues 1 to 22 (MNLRRCVQALLLLWLCLSAVCG) form the signal peptide. The propeptide occupies 23–41 (GPLLQTSDGKEMEEGTIRY). Residues 43-77 (VQPRGPRSGPGPWQGGRRKFRRQRPRLSHKGPMPF) are disordered. Residues 58 to 71 (GRRKFRRQRPRLSH) are compositionally biased toward basic residues. Gln-65 bears the Pyrrolidone carboxylic acid mark.

The protein belongs to the apelin family. In terms of processing, at least 5 active peptides may be produced by proteolytic processing of the peptide precursor.

Its subcellular location is the secreted. The protein resides in the extracellular space. In terms of biological role, peptide hormone that functions as endogenous ligand for the G-protein-coupled apelin receptor (APLNR/APJ), that plays a role in cadiovascular homeostasis. Functions as a balanced agonist activating both G(i) protein pathway and beta-arrestin pathway of APLNR. Downstream G proteins activation, apelin can inhibit cAMP production and activate key intracellular effectors such as ERKs. On the other hand, APLNR activation induces beta-arrestin recruitment to the membrane leading to desensitization and internalization of the receptor. Apelin blunts cardiac hypertrophic induction from APLNR on response to pathological stimuli, but also induces myocardial hypertrophy under normal conditions. Apelin-36 dissociates more hardly than (pyroglu)apelin-13 from APLNR. Involved in the regulation of cardiac precursor cell movements during gastrulation and heart morphogenesis. Has an inhibitory effect on cytokine production in response to T-cell receptor/CD3 cross-linking; the oral intake of apelin in the colostrum and the milk might therefore modulate immune responses in neonates. Plays a role in early coronary blood vessels formation. Mediates myocardial contractility in an ERK1/2-dependent manner. May also have a role in the central control of body fluid homeostasis by influencing vasopressin release and drinking behavior. This chain is Apelin (APLN), found in Bos taurus (Bovine).